We begin with the raw amino-acid sequence, 193 residues long: MRTAEIKRKTKETDITVRFSLDGSGKGTIHTGIPFFDHMLDSFTRHSRFDLDIQAIGDLEKGPHHTIEDIGIVLGQVFTHALGEGRGIQRFASVIVPMDESKAEVALDVGGRPYLVFEGSFSGPVEGVIESWLVRHFFESFIQNAKVTAHMNVSGFSDHHKCEALFKAFGVALHSATKIVYDDGQVPSTKGVL.

This sequence belongs to the imidazoleglycerol-phosphate dehydratase family.

Its subcellular location is the cytoplasm. The catalysed reaction is D-erythro-1-(imidazol-4-yl)glycerol 3-phosphate = 3-(imidazol-4-yl)-2-oxopropyl phosphate + H2O. The protein operates within amino-acid biosynthesis; L-histidine biosynthesis; L-histidine from 5-phospho-alpha-D-ribose 1-diphosphate: step 6/9. The chain is Imidazoleglycerol-phosphate dehydratase from Methanospirillum hungatei JF-1 (strain ATCC 27890 / DSM 864 / NBRC 100397 / JF-1).